The following is a 1774-amino-acid chain: Receptor-mediated endocytosis protein 6 homolog (1774 aa).

A Ras-GAP domain is found at 157 to 396; the sequence is ELLLKLLREL…EDVVAILPQQ (240 aa). Disordered stretches follow at residues 444-480, 517-564, 661-727, 784-811, 869-947, 983-1102, 1115-1142, and 1214-1342; these read IPKQ…NNRS, PLAN…PAPT, AAHS…HHHG, ENTL…RNFS, AEID…EDSA, ESSF…EEQP, QEEQ…SMEQ, and RAGA…GGRS. Low complexity-rich tracts occupy residues 519–533 and 540–557; these read ANGQ…SASN and SSHS…AAPA. Residues 674–683 are compositionally biased toward basic and acidic residues; the sequence is QQERDVHENE. Residues 688–713 are compositionally biased toward polar residues; sequence DMVSANVSGRGTPNISGRDTPSSQVT. Positions 794 to 809 are enriched in basic and acidic residues; that stretch reads RGGDRGDRGDRDRDRN. The span at 887–905 shows a compositional bias: gly residues; sequence PGSGGGAGVPEAGGGGGVV. The span at 929–944 shows a compositional bias: basic and acidic residues; sequence DPDRERLRNGSERSQE. Polar residues predominate over residues 1011–1027; sequence MRRQTSAESSISNQSLN. Over residues 1038-1047 the composition is skewed to basic residues; sequence LAKHHHHHQH. Residues 1048–1060 are compositionally biased toward basic and acidic residues; it reads RDRDRDRDRDRDH. The span at 1061-1076 shows a compositional bias: basic residues; it reads REHHHKSAALKKKKHQ. A compositionally biased stretch (basic and acidic residues) spans 1077-1087; sequence EHKEHQHRDLI. Residues 1091–1101 are compositionally biased toward acidic residues; that stretch reads DCSEDKDEEEQ. Low complexity predominate over residues 1115–1125; the sequence is QEEQQQQQQQQ. Over residues 1246–1291 the composition is skewed to basic and acidic residues; the sequence is SADKEQQPYRDRERERDRERDRERDRDRERDRDRDRDRDRDREHHS. Low complexity predominate over residues 1310–1335; that stretch reads SSSSKNNAIAIAAPSSINPNPSPSSA. Residues 1516-1546 are a coiled coil; that stretch reads RHRQQLLLRSEQLEQLEVRLRSEARSCQRCL. The 140-residue stretch at 1635 to 1774 folds into the VPS9 domain; the sequence is VSRDTVLSAH…KFIKTMDYLD (140 aa).

This sequence belongs to the GAPVD1 family.

The protein resides in the membrane. In terms of biological role, acts both as a GTPase-activating protein (GAP) and a guanine nucleotide exchange factor (GEF), and participates in endocytosis. The polypeptide is Receptor-mediated endocytosis protein 6 homolog (Drosophila pseudoobscura pseudoobscura (Fruit fly)).